Reading from the N-terminus, the 388-residue chain is Deoxyuridine 5'-triphosphate nucleotidohydrolase (388 aa).

The span at 77-88 (EEKYDKEQHPGE) shows a compositional bias: basic and acidic residues. Disordered regions lie at residues 77 to 96 (EEKY…SPLP) and 336 to 388 (THTP…PRHP). Acidic residues predominate over residues 351-363 (VDDDVDETEEDEK).

The protein belongs to the dUTPase family. Mg(2+) serves as cofactor.

It carries out the reaction dUTP + H2O = dUMP + diphosphate + H(+). It participates in pyrimidine metabolism; dUMP biosynthesis; dUMP from dCTP (dUTP route): step 2/2. Involved in nucleotide metabolism: produces dUMP, the immediate precursor of thymidine nucleotides and decreases the intracellular concentration of dUTP to avoid uracil incorporation into viral DNA. The chain is Deoxyuridine 5'-triphosphate nucleotidohydrolase from Homo sapiens (Human).